We begin with the raw amino-acid sequence, 157 residues long: Putative pre-16S rRNA nuclease (157 aa).

Belongs to the YqgF nuclease family.

It localises to the cytoplasm. Could be a nuclease involved in processing of the 5'-end of pre-16S rRNA. The sequence is that of Putative pre-16S rRNA nuclease from Nitrosomonas eutropha (strain DSM 101675 / C91 / Nm57).